The following is a 303-amino-acid chain: 4-sulfomuconolactone hydrolase (303 aa).

Belongs to the metallo-dependent hydrolases superfamily. Sulfomuconolactone hydrolase family. In terms of assembly, monomer. Zn(2+) is required as a cofactor.

The enzyme catalyses 4-sulfomuconolactone + H2O = maleylacetate + sulfite + 2 H(+). Completely inhibited by ZnCl(2) and CuCl(2). Functionally, involved in the degradation of 4-sulfocatechol which is a central intermediate in the degradation of substituted sulfonated benzenes. Catalyzes the hydrolytical desulfonation of 4-sulfomuconolactone to yield maleylacetate. This chain is 4-sulfomuconolactone hydrolase, found in Hydrogenophaga intermedia.